The primary structure comprises 1521 residues: Suppressor of Ty 6 homolog (1521 aa).

A disordered region spans residues methionine 1–valine 204. Residues lysine 26 to valine 41 show a composition bias toward basic residues. Positions lysine 26–valine 42 match the Nuclear localization signal motif. 2 stretches are compositionally biased toward acidic residues: residues serine 45–glutamate 56 and alanine 67–alanine 76. Basic and acidic residues predominate over residues arginine 77–isoleucine 89. The span at asparagine 90–glutamate 103 shows a compositional bias: acidic residues. Positions proline 127 to lysine 149 are enriched in basic and acidic residues. Residues arginine 167–glycine 177 show a composition bias toward acidic residues. The region spanning leucine 1182–lysine 1251 is the S1 motif domain. Residues histidine 1299–glutamine 1388 form the SH2 domain. Positions glycine 1490–arginine 1521 are disordered. Residues glycine 1504–glutamine 1513 show a composition bias toward pro residues.

The protein belongs to the SPT6 family. In terms of assembly, interacts with glp-1 and lin-12.

The protein resides in the nucleus. Its function is as follows. Histone H3-H4 chaperone that plays a role in maintenance of chromatin structure during RNA polymerase II transcription elongation. May be required for several aspects of morphogenesis of C.briggsae, including regulation of division in the germline and gut and specification of ventral-uterine precursor cell fate. The sequence is that of Suppressor of Ty 6 homolog (emb-5) from Caenorhabditis briggsae.